A 78-amino-acid polypeptide reads, in one-letter code: MTDAISLALQTGLGPVVGVIIILAMMGLTYKIAGKIPAIITGIASAFVLMFMDFLPLFWGIAIIFGLIAGMVVTRDGD.

Its function is as follows. This protein may be involved in virus assembly. Essential for virus function. This is an uncharacterized protein from Sulfolobus spindle-shape virus 1 (SSV1).